Reading from the N-terminus, the 483-residue chain is Protein DETOXIFICATION 6 (483 aa).

12 consecutive transmembrane segments (helical) span residues Ala-38–Val-58, Gly-69–Ala-89, Phe-113–Met-133, Ile-146–Val-166, Ala-187–Leu-207, Gly-211–Val-231, Ala-263–Leu-283, Val-292–Ala-312, Val-334–Ile-354, Leu-376–Val-396, Ile-405–Leu-425, and Leu-436–Ala-456.

The protein belongs to the multi antimicrobial extrusion (MATE) (TC 2.A.66.1) family.

The protein resides in the membrane. This Arabidopsis thaliana (Mouse-ear cress) protein is Protein DETOXIFICATION 6.